Here is a 354-residue protein sequence, read N- to C-terminus: NADH-quinone oxidoreductase subunit H 2 (354 aa).

Transmembrane regions (helical) follow at residues 4–24 (IALF…VLLT), 81–101 (ILAP…VPFG), 130–150 (IGLL…ALAG), 170–190 (VSYE…SGSF), 201–221 (GGFW…FIYL), 269–289 (VACI…PGFL), 296–316 (LVPV…YIWV), and 333–353 (WKFL…FVAL).

Belongs to the complex I subunit 1 family. NDH-1 is composed of 14 different subunits. Subunits NuoA, H, J, K, L, M, N constitute the membrane sector of the complex.

The protein resides in the cell inner membrane. It carries out the reaction a quinone + NADH + 5 H(+)(in) = a quinol + NAD(+) + 4 H(+)(out). Its function is as follows. NDH-1 shuttles electrons from NADH, via FMN and iron-sulfur (Fe-S) centers, to quinones in the respiratory chain. The immediate electron acceptor for the enzyme in this species is believed to be ubiquinone. Couples the redox reaction to proton translocation (for every two electrons transferred, four hydrogen ions are translocated across the cytoplasmic membrane), and thus conserves the redox energy in a proton gradient. This subunit may bind ubiquinone. The chain is NADH-quinone oxidoreductase subunit H 2 from Koribacter versatilis (strain Ellin345).